The sequence spans 326 residues: mRNA decay activator protein ZFP36 (326 aa).

The interval 1–15 (MDLTAIYESLLSLSP) is necessary for nuclear export. Residues 1 to 100 (MDLTAIYESL…PTSPTATSTT (100 aa)) form a necessary and sufficient for the association with mRNA decay enzymes and mRNA decay activation region. Necessary for localization of ARE-containing mRNAs to processing bodies (PBs) regions lie at residues 1 to 174 (MDLT…DLAA) and 100 to 326 (TPSR…SVSE). The segment at 13-66 (LSPDVPVPSDHGGTESSPGWGSSGPWSLSPSDSSPSGVTSRLPGRSTSLVEGRS) is disordered. A compositionally biased stretch (low complexity) spans 28–49 (SSPGWGSSGPWSLSPSDSSPSG). Serine 60 carries the post-translational modification Phosphoserine; by MAPKAPK2. The residue at position 66 (serine 66) is a Phosphoserine. The stretch at 71–75 (PPPPG) is one P-P-P-P-G repeat. The segment at 78 to 102 (PLAPRLGPELSPSPTSPTATSTTPS) is disordered. Residues serine 88 and serine 90 each carry the phosphoserine modification. Residue threonine 92 is modified to Phosphothreonine. Serine 93 is subject to Phosphoserine. Residues 95-168 (TATSTTPSRY…GSRCHFIHNP (74 aa)) are necessary for nuclear localization. The necessary for RNA-binding stretch occupies residues 97–173 (TSTTPSRYKT…FIHNPSEDLA (77 aa)). 2 consecutive C3H1-type zinc fingers follow at residues 103–131 (RYKT…HGLG) and 141–169 (KYKT…HNPS). The segment at 103–194 (RYKTELCRTF…ISFSGLPSGR (92 aa)) is necessary for interaction with PABPN1. Serine 169 carries the phosphoserine modification. The tract at residues 174-326 (APGHPPVLRQ…PIFNRISVSE (153 aa)) is necessary for mRNA decay activation. 2 disordered regions span residues 175 to 245 (PGHP…RRDP) and 273 to 292 (SVQS…SSLG). Serine 186 carries the post-translational modification Phosphoserine; by MAPKAPK2. A Phosphoserine modification is found at serine 197. One copy of the P-P-P-P-G repeat lies at 198-202 (PPPPG). Positions 204-216 (AGPSLSSSSFSPS) are enriched in low complexity. The residue at position 218 (serine 218) is a Phosphoserine. The P-P-P-P-G repeat unit spans residues 219–223 (PPPPG). Serine 228 carries the phosphoserine; by MAPK1; in vitro modification. A phosphoserine mark is found at serine 276, serine 296, and serine 323. Positions 312-326 (APRRLPIFNRISVSE) are interaction with CNOT1.

In terms of assembly, associates with cytoplasmic CCR4-NOT and PAN2-PAN3 deadenylase complexes to trigger ARE-containing mRNA deadenylation and decay processes. Part of a mRNA decay activation complex at least composed of poly(A)-specific exoribonucleases CNOT6, EXOSC2 and XRN1 and mRNA-decapping enzymes DCP1A and DCP2. Associates with the RNA exosome complex. Interacts (via phosphorylated form) with 14-3-3 proteins; these interactions promote exclusion of ZFP36 from cytoplasmic stress granules in response to arsenite treatment in a MAPKAPK2-dependent manner and does not prevent CCR4-NOT deadenylase complex recruitment or ZFP36-induced ARE-containing mRNA deadenylation and decay processes. Interacts with 14-3-3 proteins; these interactions occur in response to rapamycin in an Akt-dependent manner. Interacts with AGO2 and AGO4. Interacts (via C-terminus) with CNOT1; this interaction occurs in a RNA-independent manner and induces mRNA deadenylation. Interacts (via N-terminus) with CNOT6. Interacts with CNOT6L. Interacts (via C-terminus) with CNOT7; this interaction occurs in a RNA-independent manner, induces mRNA deadenylation and is inhibited in a phosphorylation MAPKAPK2-dependent manner. Interacts (via unphosphorylated form) with CNOT8; this interaction occurs in a RNA-independent manner and is inhibited in a phosphorylation MAPKAPK2-dependent manner. Interacts with DCP1A. Interacts (via N-terminus) with DCP2. Interacts with EDC3. Interacts (via N-terminus) with EXOSC2. Interacts with heat shock 70 kDa proteins. Interacts with KHSRP; this interaction increases upon cytokine-induced treatment. Interacts with MAP3K4; this interaction enhances the association with SH3KBP1/CIN85. Interacts with MAPKAPK2; this interaction occurs upon skeletal muscle satellite cell activation. Interacts with NCL. Interacts with NUP214; this interaction increases upon lipopolysaccharide (LPS) stimulation. Interacts with PABPC1; this interaction occurs in a RNA-dependent manner. Interacts (via hypophosphorylated form) with PABPN1 (via RRM domain and C-terminal arginine-rich region); this interaction occurs in the nucleus in a RNA-independent manner, decreases in presence of single-stranded poly(A) RNA-oligomer and in a p38 MAPK-dependent-manner and inhibits nuclear poly(A) tail synthesis. Interacts with PAN2. Interacts (via C3H1-type zinc finger domains) with PKM. Interacts (via C3H1-type zinc finger domains) with nuclear RNA poly(A) polymerase. Interacts with PPP2CA; this interaction occurs in LPS-stimulated cells and induces ZFP36 dephosphorylation, and hence may promote ARE-containing mRNAs decay. Interacts (via C-terminus) with PRR5L (via C-terminus); this interaction may accelerate ZFP36-mediated mRNA decay during stress. Interacts (via C-terminus) with SFN; this interaction occurs in a phosphorylation-dependent manner. Interacts (via extreme C-terminal region) with SH3KBP1/CIN85 (via SH3 domains); this interaction enhances MAP3K4-induced phosphorylation of ZFP36 at Ser-66 and Ser-93 and does not alter neither ZFP36 binding to ARE-containing transcripts nor TNF-alpha mRNA decay. Interacts with XRN1. Interacts (via C-terminus and Ser-186 phosphorylated form) with YWHAB; this interaction occurs in a p38/MAPKAPK2-dependent manner, increases cytoplasmic localization of ZFP36 and protects ZFP36 from Ser-186 dephosphorylation by serine/threonine phosphatase 2A, and hence may be crucial for stabilizing ARE-containing mRNAs. Interacts (via phosphorylated form) with YWHAE. Interacts (via C-terminus) with YWHAG; this interaction occurs in a phosphorylation-dependent manner. Interacts with YWHAH; this interaction occurs in a phosphorylation-dependent manner. Interacts with YWHAQ; this interaction occurs in a phosphorylation-dependent manner. Interacts with (via C-terminus) YWHAZ; this interaction occurs in a phosphorylation-dependent manner. Interacts (via P-P-P-P-G repeats) with GIGYF2; the interaction is direct. (Microbial infection) Interacts (via C-terminus) with HTLV-1 TAX (via C-terminus); this interaction inhibits HTLV-1 TAX to transactivate viral long terminal repeat (LTR) promoter. Post-translationally, phosphorylated. Phosphorylation at serine and/or threonine residues occurs in a p38 MAPK- and MAPKAPK2-dependent manner. Phosphorylated by MAPKAPK2 at Ser-60 and Ser-186; phosphorylation increases its stability and cytoplasmic localization, promotes binding to 14-3-3 adapter proteins and inhibits the recruitment of cytoplasmic CCR4-NOT and PAN2-PAN3 deadenylase complexes to the mRNA decay machinery, thereby inhibiting ZFP36-induced ARE-containing mRNA deadenylation and decay processes. Phosphorylation by MAPKAPK2 does not impair ARE-containing RNA-binding. Phosphorylated in a MAPKAPK2- and p38 MAPK-dependent manner upon skeletal muscle satellite cell activation; this phosphorylation inhibits ZFP36-mediated mRNA decay activity, and hence stabilizes MYOD1 mRNA. Phosphorylated by MAPK1 upon mitogen stimulation. Phosphorylated at Ser-66 and Ser-93; these phosphorylations increase in a SH3KBP1-dependent manner. Phosphorylated at serine and threonine residues in a pyruvate kinase PKM- and p38 MAPK-dependent manner. Phosphorylation at Ser-60 may participate in the PKM-mediated degradation of ZFP36 in a p38 MAPK-dependent manner. Dephosphorylated by serine/threonine phosphatase 2A at Ser-186. In terms of processing, ubiquitinated; pyruvate kinase (PKM)-dependent ubiquitination leads to proteasomal degradation through a p38 MAPK signaling pathway. In terms of tissue distribution, expressed in both basal and suprabasal epidermal layers. Expressed in epidermal keratinocytes. Expressed strongly in mature dendritic cells. Expressed in immature dendritic cells (at protein level).

The protein resides in the nucleus. It is found in the cytoplasm. Its subcellular location is the cytoplasmic granule. It localises to the P-body. In terms of biological role, zinc-finger RNA-binding protein that destabilizes several cytoplasmic AU-rich element (ARE)-containing mRNA transcripts by promoting their poly(A) tail removal or deadenylation, and hence provide a mechanism for attenuating protein synthesis. Acts as an 3'-untranslated region (UTR) ARE mRNA-binding adapter protein to communicate signaling events to the mRNA decay machinery. Recruits deadenylase CNOT7 (and probably the CCR4-NOT complex) via association with CNOT1, and hence promotes ARE-mediated mRNA deadenylation. Functions also by recruiting components of the cytoplasmic RNA decay machinery to the bound ARE-containing mRNAs. Self regulates by destabilizing its own mRNA. Binds to 3'-UTR ARE of numerous mRNAs and of its own mRNA. Plays a role in anti-inflammatory responses; suppresses tumor necrosis factor (TNF)-alpha production by stimulating ARE-mediated TNF-alpha mRNA decay and several other inflammatory ARE-containing mRNAs in interferon (IFN)- and/or lipopolysaccharide (LPS)-induced macrophages. Also plays a role in the regulation of dendritic cell maturation at the post-transcriptional level, and hence operates as part of a negative feedback loop to limit the inflammatory response. Promotes ARE-mediated mRNA decay of hypoxia-inducible factor HIF1A mRNA during the response of endothelial cells to hypoxia. Positively regulates early adipogenesis of preadipocytes by promoting ARE-mediated mRNA decay of immediate early genes (IEGs). Negatively regulates hematopoietic/erythroid cell differentiation by promoting ARE-mediated mRNA decay of the transcription factor STAT5B mRNA. Plays a role in maintaining skeletal muscle satellite cell quiescence by promoting ARE-mediated mRNA decay of the myogenic determination factor MYOD1 mRNA. Associates also with and regulates the expression of non-ARE-containing target mRNAs at the post-transcriptional level, such as MHC class I mRNAs. Participates in association with argonaute RISC catalytic components in the ARE-mediated mRNA decay mechanism; assists microRNA (miRNA) targeting ARE-containing mRNAs. May also play a role in the regulation of cytoplasmic mRNA decapping; enhances decapping of ARE-containing RNAs, in vitro. Involved in the delivery of target ARE-mRNAs to processing bodies (PBs). In addition to its cytosolic mRNA-decay function, affects nuclear pre-mRNA processing. Negatively regulates nuclear poly(A)-binding protein PABPN1-stimulated polyadenylation activity on ARE-containing pre-mRNA during LPS-stimulated macrophages. Also involved in the regulation of stress granule (SG) and P-body (PB) formation and fusion. Plays a role in the regulation of keratinocyte proliferation, differentiation and apoptosis. Plays a role as a tumor suppressor by inhibiting cell proliferation in breast cancer cells. Its function is as follows. (Microbial infection) Negatively regulates HTLV-1 TAX-dependent transactivation of viral long terminal repeat (LTR) promoter. The polypeptide is mRNA decay activator protein ZFP36 (Homo sapiens (Human)).